The chain runs to 770 residues: Conserved oligomeric Golgi complex subunit 7 (770 aa).

It belongs to the COG7 family. As to quaternary structure, component of the conserved oligomeric Golgi complex which is composed of eight different subunits and is required for normal Golgi morphology and localization.

It localises to the golgi apparatus membrane. Functionally, required for normal Golgi function. This chain is Conserved oligomeric Golgi complex subunit 7 (COG7), found in Homo sapiens (Human).